Consider the following 310-residue polypeptide: 4-diphosphocytidyl-2-C-methyl-D-erythritol kinase (310 aa).

Lys10 is an active-site residue. 102 to 112 (PVAGGMAGGSA) contributes to the ATP binding site. Asp144 is a catalytic residue. The disordered stretch occupies residues 289-310 (TRTARGPAAGAQLLPGPVGSFA).

Belongs to the GHMP kinase family. IspE subfamily.

The catalysed reaction is 4-CDP-2-C-methyl-D-erythritol + ATP = 4-CDP-2-C-methyl-D-erythritol 2-phosphate + ADP + H(+). The protein operates within isoprenoid biosynthesis; isopentenyl diphosphate biosynthesis via DXP pathway; isopentenyl diphosphate from 1-deoxy-D-xylulose 5-phosphate: step 3/6. In terms of biological role, catalyzes the phosphorylation of the position 2 hydroxy group of 4-diphosphocytidyl-2C-methyl-D-erythritol. This is 4-diphosphocytidyl-2-C-methyl-D-erythritol kinase from Cutibacterium acnes (strain DSM 16379 / KPA171202) (Propionibacterium acnes).